The primary structure comprises 326 residues: Trans-L-3-hydroxyproline dehydratase (326 aa).

Cysteine 80 functions as the Proton acceptor in the catalytic mechanism. Substrate contacts are provided by residues 81–82 (GH), aspartate 241, and 246–247 (GS).

The protein belongs to the proline racemase family. As to quaternary structure, homodimer.

The enzyme catalyses trans-3-hydroxy-L-proline = 1-pyrroline-2-carboxylate + H2O. In terms of biological role, catalyzes the dehydration of trans-3-hydroxy-L-proline to delta-1-pyrroline-2-carboxylate (Pyr2C). The protein is Trans-L-3-hydroxyproline dehydratase (l3hypdh) of Saccoglossus kowalevskii (Acorn worm).